Consider the following 625-residue polypeptide: Vacuolar-sorting receptor 2 (625 aa).

A signal peptide spans 1-19; that stretch reads MRTTNVWLVVIVWVTVGWS. Residues 20-567 are Lumenal-facing; it reads SCTGRFVVEK…INRDARGDFS (548 aa). The region spanning 55-167 is the PA domain; it reads QYGGSMSGAV…SLGSAIKTAI (113 aa). N-linked (GlcNAc...) asparagine glycosylation is found at Asn-147, Asn-293, and Asn-433. EGF-like domains follow at residues 415–465 and 468–515; these read ETNE…THCE and GALR…KECK. Intrachain disulfides connect Cys-419-Cys-437, Cys-426-Cys-446, Cys-448-Cys-464, Cys-472-Cys-492, Cys-479-Cys-500, Cys-502-Cys-514, and Cys-544-Cys-557. One can recognise an EGF-like 3; calcium-binding domain in the interval 516–558; that stretch reads DVNECEEKTACQCRDCKCKNTWGSYECSCSGSLLYIREHDICI. Residues 568 to 588 traverse the membrane as a helical segment; sequence WGVIWIIIMGLGAAALGAYTV. The Cytoplasmic portion of the chain corresponds to 589-625; that stretch reads YKYRIRTYMDSEIRAIMAQYMPLDNNPNTQLSSQLEL. Residues 608-611 carry the Tyrosine-based internalization motif motif; it reads YMPL.

Belongs to the VSR (BP-80) family. In terms of tissue distribution, expressed only in flowers.

The protein localises to the membrane. It is found in the golgi apparatus membrane. It localises to the cytoplasmic vesicle. The protein resides in the clathrin-coated vesicle membrane. Its subcellular location is the prevacuolar compartment membrane. In terms of biological role, vacuolar-sorting receptor (VSR) involved in clathrin-coated vesicles sorting from Golgi apparatus to vacuoles. This chain is Vacuolar-sorting receptor 2, found in Arabidopsis thaliana (Mouse-ear cress).